The sequence spans 563 residues: E3 ubiquitin-protein ligase IpaH2.5 (563 aa).

The tract at residues 1-270 (MIKSTNIQVI…PDYSGPQIFF (270 aa)) is interaction with target proteins. LRR repeat units lie at residues 69 to 90 (LQNQ…PDLP), 91 to 115 (PQIT…MLKV), 117 to 130 (HAQF…PALP), 131 to 150 (ETLE…PFLP), 151 to 170 (ENLT…PLLP), 171 to 195 (PELK…KLEG), 197 to 209 (ALAN…LPEL), and 210 to 233 (PFSM…VLRL). Residues 271 to 281 (SMGNSATISAP) form a linker region. The E3 ubiquitin-protein ligase catalytic domain stretch occupies residues 282–563 (EHSLADAVTA…YRQLTDEVLA (282 aa)). The region spanning 284 to 563 (SLADAVTAWF…YRQLTDEVLA (280 aa)) is the NEL domain. The active-site Glycyl thioester intermediate is the Cys368.

The protein belongs to the LRR-containing bacterial E3 ligase family. As to quaternary structure, interacts with human RBCK1/HOIL-1 and RNF31/HOIP components of the LUBAC complex. Post-translationally, ubiquitinated in the presence of host E1 ubiquitin-activating enzyme, E2 ubiquitin-conjugating enzyme and ubiquitin.

Its subcellular location is the secreted. The protein resides in the host cytoplasm. It carries out the reaction S-ubiquitinyl-[E2 ubiquitin-conjugating enzyme]-L-cysteine + [acceptor protein]-L-lysine = [E2 ubiquitin-conjugating enzyme]-L-cysteine + N(6)-ubiquitinyl-[acceptor protein]-L-lysine.. It participates in protein modification; protein ubiquitination. Its activity is regulated as follows. Exists in an autoinhibited state in the absence of substrate protein, probably due to interactions of the leucine-rich repeat domain with the catalytic domain. Is activated upon binding to a substrate protein. E3 ubiquitin-protein ligase effector that inhibits host cell innate immunity during bacterial infection by catalyzing 'Lys-48'-linked polyubiquitination and subsequent degradation of host RNF31/HOIP. Host RNF31/HOIP is the catalytic component of the LUBAC complex, which conjugates linear ('Met-1'-linked) polyubiquitin chains at the surface of bacteria invading the host cytosol to form the ubiquitin coat surrounding bacteria. The bacterial ubiquitin coat acts as an 'eat-me' signal for xenophagy and promotes NF-kappa-B activation. The protein is E3 ubiquitin-protein ligase IpaH2.5 of Shigella flexneri.